The following is a 408-amino-acid chain: Protein SPATA31F3 (408 aa).

Residues 11–31 (VGYPFYTYGSIIIIALIIWQV) traverse the membrane as a helical segment. The disordered stretch occupies residues 51 to 71 (QKVKQRAKEKTPRARRHSRKE). Ser-152 is modified (phosphoserine). Disordered stretches follow at residues 297–316 (TKTK…MKGA) and 351–408 (LPLS…SASS). Residues 351–392 (LPLSSGSSKRSPLLTCATQPENPSHVSVSTSAEGTCLPQEST) show a composition bias toward polar residues.

It belongs to the SPATA31 family.

Its subcellular location is the membrane. This is Protein SPATA31F3 (SPATA31F3) from Bos taurus (Bovine).